The following is a 128-amino-acid chain: Small ribosomal subunit protein eS8 (128 aa).

It belongs to the eukaryotic ribosomal protein eS8 family. Part of the 30S ribosomal subunit.

The polypeptide is Small ribosomal subunit protein eS8 (Methanococcus aeolicus (strain ATCC BAA-1280 / DSM 17508 / OCM 812 / Nankai-3)).